A 748-amino-acid chain; its full sequence is Phosphoribosylformylglycinamidine synthase subunit PurL (748 aa).

His-47 is a catalytic residue. ATP is bound by residues Tyr-50 and Lys-90. Glu-92 provides a ligand contact to Mg(2+). Residues 93 to 96 (SHNH) and Arg-115 contribute to the substrate site. His-94 serves as the catalytic Proton acceptor. Residue Asp-116 coordinates Mg(2+). Gln-240 is a substrate binding site. Asp-268 contributes to the Mg(2+) binding site. Residue 312 to 314 (ESQ) coordinates substrate. Asn-500 and Gly-537 together coordinate ATP. Asn-538 is a Mg(2+) binding site. Ser-540 contributes to the substrate binding site.

Belongs to the FGAMS family. Monomer. Part of the FGAM synthase complex composed of 1 PurL, 1 PurQ and 2 PurS subunits.

It is found in the cytoplasm. The catalysed reaction is N(2)-formyl-N(1)-(5-phospho-beta-D-ribosyl)glycinamide + L-glutamine + ATP + H2O = 2-formamido-N(1)-(5-O-phospho-beta-D-ribosyl)acetamidine + L-glutamate + ADP + phosphate + H(+). It functions in the pathway purine metabolism; IMP biosynthesis via de novo pathway; 5-amino-1-(5-phospho-D-ribosyl)imidazole from N(2)-formyl-N(1)-(5-phospho-D-ribosyl)glycinamide: step 1/2. In terms of biological role, part of the phosphoribosylformylglycinamidine synthase complex involved in the purines biosynthetic pathway. Catalyzes the ATP-dependent conversion of formylglycinamide ribonucleotide (FGAR) and glutamine to yield formylglycinamidine ribonucleotide (FGAM) and glutamate. The FGAM synthase complex is composed of three subunits. PurQ produces an ammonia molecule by converting glutamine to glutamate. PurL transfers the ammonia molecule to FGAR to form FGAM in an ATP-dependent manner. PurS interacts with PurQ and PurL and is thought to assist in the transfer of the ammonia molecule from PurQ to PurL. The polypeptide is Phosphoribosylformylglycinamidine synthase subunit PurL (Leptospira biflexa serovar Patoc (strain Patoc 1 / Ames)).